Reading from the N-terminus, the 82-residue chain is Ranatensin (82 aa).

The N-terminal stretch at 1-27 (MTTIPAIGILPIDFLTILLLFSFISHS) is a signal peptide. Positions 28–47 (VCVEFAEDAGELDKSNAFRR) are excised as a propeptide. M58 is modified (methionine amide). Residues 62-82 (SLSDDTEQATMYSSRFVESTS) constitute a propeptide that is removed on maturation.

The protein belongs to the bombesin/neuromedin-B/ranatensin family. In terms of tissue distribution, expressed by the skin glands.

It is found in the secreted. The chain is Ranatensin from Lithobates pipiens (Northern leopard frog).